Reading from the N-terminus, the 501-residue chain is MLLRNRFLLLLALAGLLAFLSLSLQFFSRWLPVSLQLKTEMQVFPEFPVRLIQVGQGREEGLGAKNRKRIMPEPLTEPPALNPLYEANLYCNTPGAKERSMEGHAPPNLKLLSVQVIIRHGDRYPLYTIPKTKRPDIDCVLEPGRKPSHPHLTDFISHMSKGVDTQMDGTLGSLPRLPNHILCEMGELTQTGVVQHLRNGQLLKEIYLKKHRLLTSAWTAKHLYFESTGKSRTLQSGLALLYSLLPNFDWKKINVKHQWSTIFCSNHCDCPMRNHYLEEEQRRQYNFRVKNSLLEKTYINMAKIVGIPTRQLRASNPIDSLLCNFCHNATFPCTKNGCIDLEHFKVIKTHQLEDEKERYEKQLYFKYALMATHPLLNQTANRMLRIAEGKKDELFALYSAHDVTLSPILSALGLREARFPRFAARLVFELWHDPEKANNHYVRVLYNGEDVTFQTSFCRDQLRSSKRPLCPLKKFSTFVQKDMFSSLNSTSYYDACHQRLF.

Residues 1 to 6 are Cytoplasmic-facing; sequence MLLRNR. A helical; Signal-anchor for type II membrane protein transmembrane segment spans residues 7-27; that stretch reads FLLLLALAGLLAFLSLSLQFF. Residues 28–501 lie on the Lumenal side of the membrane; the sequence is SRWLPVSLQL…YYDACHQRLF (474 aa). Histidine 120 (nucleophile) is an active-site residue. Residues asparagine 328 and asparagine 377 are each glycosylated (N-linked (GlcNAc...) asparagine). The Proton donor role is filled by aspartate 402. Asparagine 488 carries an N-linked (GlcNAc...) asparagine glycan.

This sequence belongs to the histidine acid phosphatase family.

Its subcellular location is the golgi apparatus membrane. It carries out the reaction 3-O-[beta-D-GlcA-(1-&gt;3)-beta-D-Gal-(1-&gt;3)-beta-D-Gal-(1-&gt;4)-beta-D-2-O-P-Xyl]-L-seryl-[protein] + H2O = 3-O-(beta-D-GlcA-(1-&gt;3)-beta-D-Gal-(1-&gt;3)-beta-D-Gal-(1-&gt;4)-beta-D-Xyl)-L-seryl-[protein] + phosphate. Responsible for the 2-O-dephosphorylation of xylose in the glycosaminoglycan-protein linkage region of proteoglycans thereby regulating the amount of mature glycosaminoglycan (GAG) chains. Sulfated glycosaminoglycans (GAGs), including heparan sulfate and chondroitin sulfate, are synthesized on the so-called common GAG-protein linkage region (GlcUAbeta1-3Galbeta1-3Galbeta1-4Xylbeta1-O-Ser) of core proteins, which is formed by the stepwise addition of monosaccharide residues by the respective specific glycosyltransferases. Xylose 2-O-dephosphorylation during completion of linkage region formation is a prerequisite for the initiation and efficient elongation of the repeating disaccharide region of GAG chains. The sequence is that of 2-phosphoxylose phosphatase 1 from Xenopus tropicalis (Western clawed frog).